We begin with the raw amino-acid sequence, 298 residues long: UDP-3-O-acyl-N-acetylglucosamine deacetylase (298 aa).

Residues His-75, His-232, and Asp-236 each coordinate Zn(2+). The Proton donor role is filled by His-259.

The protein belongs to the LpxC family. Requires Zn(2+) as cofactor.

The enzyme catalyses a UDP-3-O-[(3R)-3-hydroxyacyl]-N-acetyl-alpha-D-glucosamine + H2O = a UDP-3-O-[(3R)-3-hydroxyacyl]-alpha-D-glucosamine + acetate. It functions in the pathway glycolipid biosynthesis; lipid IV(A) biosynthesis; lipid IV(A) from (3R)-3-hydroxytetradecanoyl-[acyl-carrier-protein] and UDP-N-acetyl-alpha-D-glucosamine: step 2/6. Its function is as follows. Catalyzes the hydrolysis of UDP-3-O-myristoyl-N-acetylglucosamine to form UDP-3-O-myristoylglucosamine and acetate, the committed step in lipid A biosynthesis. The protein is UDP-3-O-acyl-N-acetylglucosamine deacetylase of Wolinella succinogenes (strain ATCC 29543 / DSM 1740 / CCUG 13145 / JCM 31913 / LMG 7466 / NCTC 11488 / FDC 602W) (Vibrio succinogenes).